The sequence spans 247 residues: Mannose-P-dolichol utilization defect 1 protein (247 aa).

Position 2 is an N-acetylalanine (Ala-2). 7 consecutive transmembrane segments (helical) span residues 37–57, 74–94, 100–120, 128–145, 151–171, 185–205, and 213–233; these read CLKI…SLLV, LSLQ…VYSI, FSSW…CFLV, VKGV…LALL, LAVV…GKLL, LSAI…FTSV, and MAGV…QVLF. A PQ-loop 1 domain is found at 39-105; sequence KILLSKGLGL…NNFPFSSWGE (67 aa). One can recognise a PQ-loop 2 domain in the interval 159-216; the sequence is ASNVPAVVVGKLLQAATNYRNGHTGQLSAITVFMLFGGSLARIFTSVQETGDPLMAGV.

The protein belongs to the MPDU1 (TC 2.A.43.3) family.

Its subcellular location is the membrane. In terms of biological role, required for normal utilization of mannose-dolichol phosphate (Dol-P-Man) in the synthesis of N-linked and O-linked oligosaccharides and GPI anchors. The protein is Mannose-P-dolichol utilization defect 1 protein (Mpdu1) of Mus musculus (Mouse).